A 131-amino-acid chain; its full sequence is Small ribosomal subunit protein uS8 (131 aa).

Belongs to the universal ribosomal protein uS8 family. Part of the 30S ribosomal subunit. Contacts proteins S5 and S12.

In terms of biological role, one of the primary rRNA binding proteins, it binds directly to 16S rRNA central domain where it helps coordinate assembly of the platform of the 30S subunit. The protein is Small ribosomal subunit protein uS8 of Ruminiclostridium cellulolyticum (strain ATCC 35319 / DSM 5812 / JCM 6584 / H10) (Clostridium cellulolyticum).